The chain runs to 192 residues: Hydrogenase expression/formation protein HupD (192 aa).

Ni(2+)-binding residues include glutamate 23, aspartate 69, and histidine 100.

The protein belongs to the peptidase A31 family.

Functionally, not known. Could be involved in the processing of hydrogenase. This chain is Hydrogenase expression/formation protein HupD (hupD), found in Bradyrhizobium diazoefficiens (strain JCM 10833 / BCRC 13528 / IAM 13628 / NBRC 14792 / USDA 110).